A 166-amino-acid polypeptide reads, in one-letter code: Putative glycine-rich cell wall structural protein 1 (166 aa).

The signal sequence occupies residues 1 to 23 (MARKVIALAFLLLLTISLSKSNA). 2 R2; Tyr-rich repeats span residues 56-62 (GYGYNYG) and 93-99 (GYGYGYG). The interval 105-125 (AQGQGSGGGGGGGGGGGGGGS) is disordered. The stretch at 132 to 138 (GYGYGYG) is one R2; Tyr-rich repeat. A compositionally biased stretch (gly residues) spans 144–160 (GGGGGGDGGGGGGGGSA). Residues 144–166 (GGGGGGDGGGGGGGGSAYVGRHE) are disordered.

It localises to the secreted. The protein localises to the cell wall. Its function is as follows. Responsible for plasticity of the cell wall. This chain is Putative glycine-rich cell wall structural protein 1 (GRP-1), found in Oryza sativa subsp. japonica (Rice).